The following is a 234-amino-acid chain: LexA repressor (234 aa).

Residues 41–61 (RAEIANELGFKSANAAEEHLQ) constitute a DNA-binding region (H-T-H motif). Catalysis depends on for autocatalytic cleavage activity residues Ser152 and Lys189.

This sequence belongs to the peptidase S24 family. In terms of assembly, homodimer.

It catalyses the reaction Hydrolysis of Ala-|-Gly bond in repressor LexA.. In terms of biological role, represses a number of genes involved in the response to DNA damage (SOS response), including recA and lexA. In the presence of single-stranded DNA, RecA interacts with LexA causing an autocatalytic cleavage which disrupts the DNA-binding part of LexA, leading to derepression of the SOS regulon and eventually DNA repair. The chain is LexA repressor from Polaromonas sp. (strain JS666 / ATCC BAA-500).